We begin with the raw amino-acid sequence, 431 residues long: Adenylosuccinate synthetase (431 aa).

Residues 12-18 (GDEGKGK) and 40-42 (GHT) each bind GTP. Catalysis depends on Asp13, which acts as the Proton acceptor. Mg(2+) is bound by residues Asp13 and Gly40. IMP is bound by residues 13–16 (DEGK), 38–41 (NAGH), Thr130, Arg144, Gln225, Thr240, and Arg304. Residue His41 is the Proton donor of the active site. 300–306 (ATTGRPR) is a substrate binding site. Residues Arg306, 332–334 (KLD), and 414–416 (SVG) each bind GTP.

It belongs to the adenylosuccinate synthetase family. As to quaternary structure, homodimer. Mg(2+) is required as a cofactor.

It is found in the cytoplasm. The catalysed reaction is IMP + L-aspartate + GTP = N(6)-(1,2-dicarboxyethyl)-AMP + GDP + phosphate + 2 H(+). The protein operates within purine metabolism; AMP biosynthesis via de novo pathway; AMP from IMP: step 1/2. Plays an important role in the de novo pathway of purine nucleotide biosynthesis. Catalyzes the first committed step in the biosynthesis of AMP from IMP. The polypeptide is Adenylosuccinate synthetase (Geotalea daltonii (strain DSM 22248 / JCM 15807 / FRC-32) (Geobacter daltonii)).